Consider the following 208-residue polypeptide: Small ribosomal subunit protein uS4 (208 aa).

The S4 RNA-binding domain occupies R98 to A160.

It belongs to the universal ribosomal protein uS4 family. In terms of assembly, part of the 30S ribosomal subunit. Contacts protein S5. The interaction surface between S4 and S5 is involved in control of translational fidelity.

Functionally, one of the primary rRNA binding proteins, it binds directly to 16S rRNA where it nucleates assembly of the body of the 30S subunit. Its function is as follows. With S5 and S12 plays an important role in translational accuracy. This is Small ribosomal subunit protein uS4 from Nautilia profundicola (strain ATCC BAA-1463 / DSM 18972 / AmH).